Reading from the N-terminus, the 629-residue chain is Embryonic polyadenylate-binding protein A (629 aa).

4 consecutive RRM domains span residues 11-89 (ASLY…WSQR), 99-175 (GNVF…HFKS), 191-268 (TNVY…RAQK), and 294-370 (VNLY…LAQR). The 78-residue stretch at 539–616 (QEPLTASLLA…AVAVLQAHQA (78 aa)) folds into the PABC domain.

This sequence belongs to the polyadenylate-binding protein type-1 family. As to quaternary structure, interacts with dazl in an RNA-independent manner. The C-terminus can self-associate and also interact with the C-terminus of pabpc1, independently of RNA. RRM 1 and RRM 2 interact with both eif4g1 and paip1, and the C-terminus also interacts with paip1. Prior to oocyte maturation, found in a complex with dazl and pum2 proteins and spdy1 mRNA; pum2 dissociates from the complex during maturation. Interacts with the translation termination factor sup35/erf3. As to expression, expressed in adult testis, but at a reduced level compared to oocytes.

Its subcellular location is the cytoplasm. Its function is as follows. Binds and protects the poly(A) tail of mRNA with or without an AU-rich element (ARE) and prevents mRNA deadenylation. Stimulates the translation of mRNAs to which it is bound during early development. The chain is Embryonic polyadenylate-binding protein A (epabp-a) from Xenopus laevis (African clawed frog).